The sequence spans 238 residues: Small ribosomal subunit protein uS2 (238 aa).

This sequence belongs to the universal ribosomal protein uS2 family.

The polypeptide is Small ribosomal subunit protein uS2 (Prochlorococcus marinus (strain MIT 9211)).